A 189-amino-acid polypeptide reads, in one-letter code: Hypoxanthine/guanine phosphoribosyltransferase (189 aa).

The protein belongs to the purine/pyrimidine phosphoribosyltransferase family. Archaeal HPRT subfamily. As to quaternary structure, homodimer.

The protein localises to the cytoplasm. It carries out the reaction IMP + diphosphate = hypoxanthine + 5-phospho-alpha-D-ribose 1-diphosphate. The catalysed reaction is GMP + diphosphate = guanine + 5-phospho-alpha-D-ribose 1-diphosphate. It functions in the pathway purine metabolism; IMP biosynthesis via salvage pathway; IMP from hypoxanthine: step 1/1. Catalyzes a salvage reaction resulting in the formation of IMP that is energically less costly than de novo synthesis. The protein is Hypoxanthine/guanine phosphoribosyltransferase of Methanosarcina mazei (strain ATCC BAA-159 / DSM 3647 / Goe1 / Go1 / JCM 11833 / OCM 88) (Methanosarcina frisia).